We begin with the raw amino-acid sequence, 528 residues long: UDP-glucuronosyltransferase 2B30 (528 aa).

The N-terminal stretch at 1–23 (MSMKWTSALLLIQLSCYLSSGNC) is a signal peptide. Lysine 135 carries the N6-succinyllysine modification. Asparagine 315 is a glycosylation site (N-linked (GlcNAc...) asparagine). The helical transmembrane segment at 493–513 (VIGFLLACVATVIFIITKCLF) threads the bilayer.

This sequence belongs to the UDP-glycosyltransferase family. In terms of tissue distribution, expressed in several tissues, including prostate, testis, mammary gland, kidney, adrenals and intestine.

It localises to the microsome membrane. It is found in the endoplasmic reticulum membrane. It catalyses the reaction glucuronate acceptor + UDP-alpha-D-glucuronate = acceptor beta-D-glucuronoside + UDP + H(+). In terms of biological role, UDPGTs are of major importance in the conjugation and subsequent elimination of potentially toxic xenobiotics and endogenous compounds. This isozyme has glucuronidating capacity on testosterone, dihydrotestosterone, 5-alpha-androstane-3-alpha,17-beta-diol, androsterone, oestradiol, tetrahydroaldosterone and tetrahydrocortisone. This enzyme is essential to inactivation of several steroids. This chain is UDP-glucuronosyltransferase 2B30 (UGT2B30), found in Macaca fascicularis (Crab-eating macaque).